Here is a 62-residue protein sequence, read N- to C-terminus: Large ribosomal subunit protein eL24 (62 aa).

Zn(2+) is bound by residues Cys-6, Cys-9, Cys-32, and Cys-36. The C4-type zinc finger occupies 6–36 (CSFCGELLEPGTGLLFAKRDGSTYYFCSSKC).

The protein belongs to the eukaryotic ribosomal protein eL24 family. As to quaternary structure, part of the 50S ribosomal subunit. Forms a cluster with proteins L3 and L14. Requires Zn(2+) as cofactor.

Binds to the 23S rRNA. This Methanococcoides burtonii (strain DSM 6242 / NBRC 107633 / OCM 468 / ACE-M) protein is Large ribosomal subunit protein eL24.